A 258-amino-acid chain; its full sequence is Mediator of RNA polymerase II transcription subunit 18 (258 aa).

Belongs to the Mediator complex subunit 18 family. In terms of assembly, component of the Mediator complex.

It localises to the nucleus. Component of the Mediator complex, a coactivator involved in the regulated transcription of nearly all RNA polymerase II-dependent genes. Mediator functions as a bridge to convey information from gene-specific regulatory proteins to the basal RNA polymerase II transcription machinery. Mediator is recruited to promoters by direct interactions with regulatory proteins and serves as a scaffold for the assembly of a functional preinitiation complex with RNA polymerase II and the general transcription factors. The protein is Mediator of RNA polymerase II transcription subunit 18 (SRB5) of Eremothecium gossypii (strain ATCC 10895 / CBS 109.51 / FGSC 9923 / NRRL Y-1056) (Yeast).